We begin with the raw amino-acid sequence, 103 residues long: Co-chaperonin GroES (103 aa).

The protein belongs to the GroES chaperonin family. Heptamer of 7 subunits arranged in a ring. Interacts with the chaperonin GroEL.

The protein resides in the cytoplasm. Together with the chaperonin GroEL, plays an essential role in assisting protein folding. The GroEL-GroES system forms a nano-cage that allows encapsulation of the non-native substrate proteins and provides a physical environment optimized to promote and accelerate protein folding. GroES binds to the apical surface of the GroEL ring, thereby capping the opening of the GroEL channel. The polypeptide is Co-chaperonin GroES (Synechococcus sp. (strain JA-3-3Ab) (Cyanobacteria bacterium Yellowstone A-Prime)).